The primary structure comprises 254 residues: Peroxisomal membrane protein 11-2 (254 aa).

Residues 1 to 113 (MVTAAGSPSS…YHPHPHVHPL (113 aa)) are Cytoplasmic-facing. Residues 114-134 (LVLLAYGGQGVYNFLEQFAWL) traverse the membrane as a helical segment. Residues 135–227 (AKAGLLPARL…TVGDVTGRKG (93 aa)) are Lumenal-facing. Residues 228 to 247 (LLGSSTLMASAGLLSALISV) traverse the membrane as a helical segment. Residues 248–254 (HKNWNSC) are Cytoplasmic-facing.

It belongs to the peroxin-11 family.

Its subcellular location is the peroxisome membrane. Its function is as follows. Involved in peroxisomal proliferation. The polypeptide is Peroxisomal membrane protein 11-2 (PEX11-2) (Oryza sativa subsp. japonica (Rice)).